A 134-amino-acid polypeptide reads, in one-letter code: Small ribosomal subunit protein uS9c (134 aa).

Basic and acidic residues predominate over residues 105–114; the sequence is DHHLTRDARA. Residues 105–134 form a disordered region; the sequence is DHHLTRDARAKERKKYGLHKARKAPQYSKR. Residues 115–134 show a composition bias toward basic residues; that stretch reads KERKKYGLHKARKAPQYSKR.

This sequence belongs to the universal ribosomal protein uS9 family.

The protein localises to the plastid. The protein resides in the cyanelle. The protein is Small ribosomal subunit protein uS9c (rps9) of Cyanophora paradoxa.